Reading from the N-terminus, the 236-residue chain is Rho-related GTP-binding protein RhoV (236 aa).

Positions 1 to 27 (MPPRELSEAESSPLRSPTPPPGRGSAS) are disordered. S25 bears the Phosphoserine mark. GTP contacts are provided by residues 38-45 (GDGAVGKS), 85-89 (DTAGQ), and 143-146 (TQAD). The S-palmitoyl cysteine moiety is linked to residue C234.

The protein belongs to the small GTPase superfamily. Rho family. As to quaternary structure, interacts with PAK2. It depends on Mg(2+) as a cofactor.

Its subcellular location is the cell membrane. It is found in the endosome membrane. Functionally, plays a role in the control of the actin cytoskeleton via activation of the JNK pathway. The protein is Rho-related GTP-binding protein RhoV of Bos taurus (Bovine).